The chain runs to 833 residues: Protein PAT1 homolog 1 (833 aa).

Disordered stretches follow at residues 279 to 313, 398 to 427, and 492 to 549; these read DMREDNKFSHPPPGFNQNVQPRMDPSLSPGGMHGM, NIRQNGPQFSHPSGPHSPGNRVQRKHSGMP, and EEAT…DKKL. A compositionally biased stretch (low complexity) spans 303 to 313; it reads PSLSPGGMHGM. Over residues 398-408 the composition is skewed to polar residues; it reads NIRQNGPQFSH.

This sequence belongs to the PAT1 family.

The protein resides in the cytoplasm. The protein localises to the P-body. Its function is as follows. RNA-binding protein involved in deadenylation-dependent decapping of mRNAs, leading to the degradation of mRNAs. Acts as a scaffold protein that connects deadenylation and decapping machinery. Required for the recruitment of P-body components such as cgh-1 in somatic blastomeres. May play a role in recruiting the decapping enzyme dcap-1 to cytoplasmic puncta in the cell body of the posterior touch receptor neuron, PLM. The chain is Protein PAT1 homolog 1 from Caenorhabditis elegans.